A 258-amino-acid chain; its full sequence is Imidazole glycerol phosphate synthase subunit HisF (258 aa).

Catalysis depends on residues D11 and D130.

It belongs to the HisA/HisF family. Heterodimer of HisH and HisF.

The protein resides in the cytoplasm. It carries out the reaction 5-[(5-phospho-1-deoxy-D-ribulos-1-ylimino)methylamino]-1-(5-phospho-beta-D-ribosyl)imidazole-4-carboxamide + L-glutamine = D-erythro-1-(imidazol-4-yl)glycerol 3-phosphate + 5-amino-1-(5-phospho-beta-D-ribosyl)imidazole-4-carboxamide + L-glutamate + H(+). It functions in the pathway amino-acid biosynthesis; L-histidine biosynthesis; L-histidine from 5-phospho-alpha-D-ribose 1-diphosphate: step 5/9. IGPS catalyzes the conversion of PRFAR and glutamine to IGP, AICAR and glutamate. The HisF subunit catalyzes the cyclization activity that produces IGP and AICAR from PRFAR using the ammonia provided by the HisH subunit. This Salmonella agona (strain SL483) protein is Imidazole glycerol phosphate synthase subunit HisF.